The chain runs to 471 residues: Ribulose bisphosphate carboxylase large chain (471 aa).

Residues Asn-115 and Thr-165 each contribute to the substrate site. Lys-167 functions as the Proton acceptor in the catalytic mechanism. Residue Lys-169 coordinates substrate. Mg(2+) contacts are provided by Lys-193, Asp-195, and Glu-196. The residue at position 193 (Lys-193) is an N6-carboxylysine. Residue His-286 is the Proton acceptor of the active site. Substrate is bound by residues Arg-287, His-319, and Ser-371.

The protein belongs to the RuBisCO large chain family. Type I subfamily. As to quaternary structure, heterohexadecamer of 8 large chains and 8 small chains. Mg(2+) is required as a cofactor.

The protein resides in the carboxysome. The catalysed reaction is 2 (2R)-3-phosphoglycerate + 2 H(+) = D-ribulose 1,5-bisphosphate + CO2 + H2O. It carries out the reaction D-ribulose 1,5-bisphosphate + O2 = 2-phosphoglycolate + (2R)-3-phosphoglycerate + 2 H(+). In terms of biological role, ruBisCO catalyzes two reactions: the carboxylation of D-ribulose 1,5-bisphosphate, the primary event in carbon dioxide fixation, as well as the oxidative fragmentation of the pentose substrate in the photorespiration process. Both reactions occur simultaneously and in competition at the same active site. The chain is Ribulose bisphosphate carboxylase large chain from Synechococcus sp. (strain CC9605).